We begin with the raw amino-acid sequence, 154 residues long: Myoglobin (154 aa).

Residues 2 to 148 form the Globin domain; that stretch reads GLSDGEWQLV…FRNDMAAKYK (147 aa). Serine 4 bears the Phosphoserine mark. Histidine 65 contacts nitrite. Histidine 65 is an O2 binding site. A Phosphothreonine modification is found at threonine 68. A heme b-binding site is contributed by histidine 94.

The protein belongs to the globin family. Monomeric.

The protein resides in the cytoplasm. The protein localises to the sarcoplasm. It carries out the reaction Fe(III)-heme b-[protein] + nitric oxide + H2O = Fe(II)-heme b-[protein] + nitrite + 2 H(+). The enzyme catalyses H2O2 + AH2 = A + 2 H2O. In terms of biological role, monomeric heme protein which primary function is to store oxygen and facilitate its diffusion within muscle tissues. Reversibly binds oxygen through a pentacoordinated heme iron and enables its timely and efficient release as needed during periods of heightened demand. Depending on the oxidative conditions of tissues and cells, and in addition to its ability to bind oxygen, it also has a nitrite reductase activity whereby it regulates the production of bioactive nitric oxide. Under stress conditions, like hypoxia and anoxia, it also protects cells against reactive oxygen species thanks to its pseudoperoxidase activity. The polypeptide is Myoglobin (MB) (Ochotona princeps (Southern American pika)).